The sequence spans 120 residues: NAD(P)H-quinone oxidoreductase subunit 3, chloroplastic (120 aa).

3 consecutive transmembrane segments (helical) span residues 9 to 29 (IFWA…LISG), 64 to 84 (MFAL…PWAM), and 88 to 108 (VLGV…ILGL).

The protein belongs to the complex I subunit 3 family. As to quaternary structure, NDH is composed of at least 16 different subunits, 5 of which are encoded in the nucleus.

Its subcellular location is the plastid. The protein localises to the chloroplast thylakoid membrane. It catalyses the reaction a plastoquinone + NADH + (n+1) H(+)(in) = a plastoquinol + NAD(+) + n H(+)(out). The enzyme catalyses a plastoquinone + NADPH + (n+1) H(+)(in) = a plastoquinol + NADP(+) + n H(+)(out). Its function is as follows. NDH shuttles electrons from NAD(P)H:plastoquinone, via FMN and iron-sulfur (Fe-S) centers, to quinones in the photosynthetic chain and possibly in a chloroplast respiratory chain. The immediate electron acceptor for the enzyme in this species is believed to be plastoquinone. Couples the redox reaction to proton translocation, and thus conserves the redox energy in a proton gradient. The polypeptide is NAD(P)H-quinone oxidoreductase subunit 3, chloroplastic (Olimarabidopsis pumila (Dwarf rocket)).